The sequence spans 384 residues: 1-deoxy-D-xylulose 5-phosphate reductoisomerase (384 aa).

Positions 10, 11, 12, 13, 36, 38, and 122 each coordinate NADPH. Lys123 contacts 1-deoxy-D-xylulose 5-phosphate. An NADPH-binding site is contributed by Glu124. Asp148 contributes to the Mn(2+) binding site. The 1-deoxy-D-xylulose 5-phosphate site is built by Ser149, Glu150, Ser174, and His197. Mn(2+) is bound at residue Glu150. Gly203 contributes to the NADPH binding site. Ser210, Asn215, Lys216, and Glu219 together coordinate 1-deoxy-D-xylulose 5-phosphate. A Mn(2+)-binding site is contributed by Glu219.

It belongs to the DXR family. Mg(2+) serves as cofactor. The cofactor is Mn(2+).

The enzyme catalyses 2-C-methyl-D-erythritol 4-phosphate + NADP(+) = 1-deoxy-D-xylulose 5-phosphate + NADPH + H(+). Its pathway is isoprenoid biosynthesis; isopentenyl diphosphate biosynthesis via DXP pathway; isopentenyl diphosphate from 1-deoxy-D-xylulose 5-phosphate: step 1/6. Functionally, catalyzes the NADPH-dependent rearrangement and reduction of 1-deoxy-D-xylulose-5-phosphate (DXP) to 2-C-methyl-D-erythritol 4-phosphate (MEP). In Geobacter metallireducens (strain ATCC 53774 / DSM 7210 / GS-15), this protein is 1-deoxy-D-xylulose 5-phosphate reductoisomerase.